The sequence spans 225 residues: Phosphoserine phosphatase (225 aa).

Methionine 1 carries the post-translational modification N-acetylmethionine. Aspartate 20 serves as the catalytic Nucleophile. Mg(2+) contacts are provided by aspartate 20 and aspartate 22. 20 to 22 (DVD) provides a ligand contact to L-serine. Aspartate 22 serves as the catalytic Proton donor. Methionine 52 provides a ligand contact to O-phospho-L-serine. Residue glycine 53 participates in phosphate binding. Residues 109 to 111 (SGG) and lysine 158 contribute to the L-serine site. O-phospho-L-serine-binding positions include 109 to 111 (SGG) and lysine 158. Aspartate 179 contacts Mg(2+). Residue threonine 182 participates in O-phospho-L-serine binding. Phosphate is bound at residue threonine 182.

The protein belongs to the HAD-like hydrolase superfamily. SerB family. As to quaternary structure, homodimer. It depends on Mg(2+) as a cofactor.

It localises to the cytoplasm. It is found in the cytosol. It carries out the reaction O-phospho-L-serine + H2O = L-serine + phosphate. The enzyme catalyses O-phospho-D-serine + H2O = D-serine + phosphate. Its pathway is amino-acid biosynthesis; L-serine biosynthesis; L-serine from 3-phospho-D-glycerate: step 3/3. Functionally, catalyzes the last irreversible step in the biosynthesis of L-serine from carbohydrates, the dephosphorylation of O-phospho-L-serine to L-serine. L-serine can then be used in protein synthesis, to produce other amino acids, in nucleotide metabolism or in glutathione synthesis, or can be racemized to D-serine, a neuromodulator. May also act on O-phospho-D-serine. This chain is Phosphoserine phosphatase, found in Mus musculus (Mouse).